The primary structure comprises 361 residues: BBSome complex member bbs-5 (361 aa).

The protein belongs to the BBS5 family. Part of BBSome complex, that contains at least bbs-1, bbs-2, bbs-4, bbs-5, osm-12, bbs-8/ttc-8 and bbs-9. Interacts with bbs-4 (via C-terminus); the interaction is direct.

The protein localises to the cell projection. The protein resides in the cilium membrane. It is found in the cytoplasm. It localises to the cytoskeleton. Its subcellular location is the cilium basal body. The protein localises to the microtubule organizing center. The protein resides in the centrosome. It is found in the centriolar satellite. Functionally, component of the BBSome complex. The BBSome complex is thought to function as a coat complex required for sorting of specific membrane proteins to the primary cilia. The BBSome complex is required for ciliogenesis but is dispensable for centriolar satellite function. Required for BBSome complex ciliary localization but not for the proper complex assembly. Required, redundantly with bbs-4, for cilia biogenesis and both the assembly and movement of intraflagellar transport proteins along the ciliary axoneme. Plays a role in the removal of degraded mechanosensory receptors within the cilia. The chain is BBSome complex member bbs-5 from Caenorhabditis elegans.